The sequence spans 778 residues: DNA topoisomerase 1 (778 aa).

Residues 1 to 141 (MNSSDEEDIA…ETPEEDQGYK (141 aa)) form a disordered region. The segment covering 17-26 (KSSSITSAST) has biased composition (low complexity). 2 stretches are compositionally biased toward basic and acidic residues: residues 71-83 (VKTE…EPKS) and 100-121 (EKTT…ESKT). Residues 122–131 (QSDSQASVKS) are compositionally biased toward polar residues. Interaction with DNA stretches follow at residues 367-368 (KY), 430-435 (RAGGEK), and 522-524 (TAK). The Topo IB-type catalytic domain maps to 374–778 (NSSVKGQSDF…IESADENWRF (405 aa)). Residue Tyr-736 is the O-(3'-phospho-DNA)-tyrosine intermediate of the active site.

Belongs to the type IB topoisomerase family.

The enzyme catalyses ATP-independent breakage of single-stranded DNA, followed by passage and rejoining.. Releases the supercoiling and torsional tension of DNA introduced during the DNA replication and transcription by transiently cleaving and rejoining one strand of the DNA duplex. Introduces a single-strand break via transesterification at a target site in duplex DNA. The scissile phosphodiester is attacked by the catalytic tyrosine of the enzyme, resulting in the formation of a DNA-(3'-phosphotyrosyl)-enzyme intermediate and the expulsion of a 5'-OH DNA strand. The free DNA strand then rotates around the intact phosphodiester bond on the opposing strand, thus removing DNA supercoils. Finally, in the religation step, the DNA 5'-OH attacks the covalent intermediate to expel the active-site tyrosine and restore the DNA phosphodiester backbone. The chain is DNA topoisomerase 1 (TOP1) from Candida albicans (Yeast).